The chain runs to 573 residues: Poly(ribitol-phosphate) beta-N-acetylglucosaminyltransferase TarS (573 aa).

Residues Pro-9, Asp-41, Asn-68, Arg-76, 92 to 94 (DSD), Arg-127, and Glu-178 contribute to the UDP-N-acetyl-alpha-D-glucosamine site. Position 94 (Asp-94) interacts with Mn(2+). Asp-179 acts as the Proton acceptor in catalysis. Residues Arg-207 and 211-213 (HMS) contribute to the UDP-N-acetyl-alpha-D-glucosamine site.

This sequence belongs to the glycosyltransferase 2 family. As to quaternary structure, homotrimer. The cofactor is Mn(2+).

It catalyses the reaction 4-O-[(D-ribitylphospho)(n)-di{(2R)-glycerylphospho}]-N-acetyl-beta-D-mannosaminyl-(1-&gt;4)-N-acetyl-alpha-D-glucosaminyl di-trans,octa-cis-undecaprenyl diphosphate + n UDP-N-acetyl-alpha-D-glucosamine = 4-O-([2-N-acetyl-beta-D-glucosaminyl-1-D-ribitylphospho](n)-di{[2R]-1-glycerylphospho})-N-acetyl-beta-D-mannosaminyl-(1-&gt;4)-N-acetyl-alpha-D-glucosaminyl di-trans,octa-cis-undecaprenyl diphosphate + n UDP + n H(+). Its pathway is cell wall biogenesis; poly(ribitol phosphate) teichoic acid biosynthesis. Attaches beta-O-GlcNAc (beta-O-N-acetyl-D-glucosamine) residues to the C4 position of poly(RboP)-wall teichoic acids (WTAs). Mediates beta-lactam resistance in methicillin resistant Staphylococcus aureus (MRSA) strains. The chain is Poly(ribitol-phosphate) beta-N-acetylglucosaminyltransferase TarS from Staphylococcus aureus (strain Mu50 / ATCC 700699).